The sequence spans 513 residues: Sucrose transport protein SUC1 (513 aa).

A compositionally biased stretch (basic and acidic residues) spans 1 to 11; it reads MGAYETEKPTK. Positions 1 to 26 are disordered; the sequence is MGAYETEKPTKDAAALETQSPEDFDQ. Residues 1–32 are Cytoplasmic-facing; it reads MGAYETEKPTKDAAALETQSPEDFDQPSPLRK. Phosphoserine is present on Ser-20. Residues 33 to 53 traverse the membrane as a helical segment; it reads IISVASIAAGVQFGWALQLSL. Residues 54–67 lie on the Extracellular side of the membrane; sequence LTPYVQLLGIPHKW. A helical membrane pass occupies residues 68-88; the sequence is SSLIWLCGPVSGMIVQPIVGF. Over 89 to 101 the chain is Cytoplasmic; it reads HSDRCRSKFGRRR. A helical transmembrane segment spans residues 102–122; that stretch reads PFIATGAALVAVAVFLIGYAA. The Extracellular segment spans residues 123–139; it reads DFGYKMGDKLEEKVKVR. Residues 140-160 form a helical membrane-spanning segment; sequence AIGIFALGFWILDVANNTLQG. Over 161-178 the chain is Cytoplasmic; it reads PCRAFLADLAAGDAKRTR. The helical transmembrane segment at 179–199 threads the bilayer; the sequence is VANAFFSFFMAVGNVLGYAAG. Residues 200–224 lie on the Extracellular side of the membrane; the sequence is SYTNLHKMFPFTMTKACDIYCANLK. The chain crosses the membrane as a helical span at residues 225-245; sequence TCFFLSITLLLIVTVTSLWYV. Residues 246 to 282 lie on the Cytoplasmic side of the membrane; sequence NDKQWSPPPRNADDDEKTSSVPLFGEIFGAFKVMKRP. The helical transmembrane segment at 283-303 threads the bilayer; the sequence is MWMLLIVTALNWIAWFPFLLF. At 304–334 the chain is on the extracellular side; it reads DTDWMGREVFGGDSDGNERSKKLYSLGVQSG. Residues 335–355 traverse the membrane as a helical segment; it reads AMGLMFNSIVLGFMSLGVEWI. The Cytoplasmic portion of the chain corresponds to 356–365; it reads GRKLGGAKRL. A helical transmembrane segment spans residues 366-386; sequence WGIVNFILAAGLAMTVLVTKF. Residues 387-408 lie on the Extracellular side of the membrane; the sequence is AEDHRKTAGDLAGPSASVKAGA. Residues 409–429 traverse the membrane as a helical segment; it reads LSLFAVLGIPLAITFSTPFAL. Over 430-441 the chain is Cytoplasmic; that stretch reads ASIFSSCSGAGQ. A helical transmembrane segment spans residues 442-462; it reads GLSLGVLNLAIVIPQMIVSLG. At 463-474 the chain is on the extracellular side; it reads GGPFDALFGGGN. The helical transmembrane segment at 475–495 threads the bilayer; that stretch reads LPAFIVAAIAAAISGVLALTV. Over 496–513 the chain is Cytoplasmic; the sequence is LPSPPPDAPKATTMGGFH.

The protein belongs to the glycoside-pentoside-hexuronide (GPH) cation symporter transporter (TC 2.A.2.4) family. Expressed in flowers (at protein level). Highly expressed in pollen. Expressed in pollen tubes and root vascular cylinder, pericycle and endodermis.

The protein resides in the membrane. It carries out the reaction sucrose(out) + H(+)(out) = sucrose(in) + H(+)(in). It participates in glycan biosynthesis; sucrose metabolism. Inhibited by DEPC, protonophores (e.g. dinitrophenol and carbonyl cyanide m-chlorophenyl-hydrazone (CCCP)), and SH group inhibitors (e.g. N-ethylmaleimide (NEM) and p-chloromercuriphenyl sulphonic acid (PCMPS)). In terms of biological role, responsible for the transport of sucrose into the cell, with the concomitant uptake of protons (symport system). This transport is both voltage- and energy-dependent. Can also transport other glucosides such as maltose, alpha-phenylglucoside and beta-phenylglucoside. May also transport biotin. Required for normal pollen germination and anthocyanin accumulation induced by sucrose. The sequence is that of Sucrose transport protein SUC1 from Arabidopsis thaliana (Mouse-ear cress).